The primary structure comprises 645 residues: Acetyl-coenzyme A synthetase (645 aa).

CoA-binding positions include 190–193 (RGGR) and T308. Residues 384–386 (GEP), 408–413 (DTWWQT), D497, and R512 each bind ATP. S520 provides a ligand contact to CoA. R523 is a binding site for ATP. V534, H536, and V539 together coordinate Mg(2+). N6-acetyllysine is present on K606.

This sequence belongs to the ATP-dependent AMP-binding enzyme family. Requires Mg(2+) as cofactor. Post-translationally, acetylated. Deacetylation by the SIR2-homolog deacetylase activates the enzyme.

It carries out the reaction acetate + ATP + CoA = acetyl-CoA + AMP + diphosphate. Functionally, catalyzes the conversion of acetate into acetyl-CoA (AcCoA), an essential intermediate at the junction of anabolic and catabolic pathways. AcsA undergoes a two-step reaction. In the first half reaction, AcsA combines acetate with ATP to form acetyl-adenylate (AcAMP) intermediate. In the second half reaction, it can then transfer the acetyl group from AcAMP to the sulfhydryl group of CoA, forming the product AcCoA. The chain is Acetyl-coenzyme A synthetase from Halorhodospira halophila (strain DSM 244 / SL1) (Ectothiorhodospira halophila (strain DSM 244 / SL1)).